Reading from the N-terminus, the 637-residue chain is Chaperone protein DnaK (637 aa).

Thr-196 carries the phosphothreonine; by autocatalysis modification. Disordered stretches follow at residues Lys-484–Thr-528 and Thr-598–Lys-637. Positions Ser-501–Thr-528 are enriched in basic and acidic residues. Over residues Ala-600–Ser-620 the composition is skewed to low complexity. Residues Gly-621–Lys-637 are compositionally biased toward basic and acidic residues.

It belongs to the heat shock protein 70 family.

Functionally, acts as a chaperone. The chain is Chaperone protein DnaK from Chloroherpeton thalassium (strain ATCC 35110 / GB-78).